Reading from the N-terminus, the 243-residue chain is MSRAPLPLAAHERLIFALDVPSHDQAIAWVDRLGDSVSFYKIGMELLASGEYFHVLDALAKRDKRVFVDLKFFDIPATVAGTIRRLAQWPVSYCTVHGWHAGMLQAAAEANHGDMRLLAVTVLTSMGRPDLVAMGIDREPVDVVVERALAARAAGIDGVIASGQEAGPIRRATGPDFSIVCPGIRPGGPVGDDQQRTVGVAQAFIDGADAIVVGRPIRLASDPAAAADAIQAEIRAALMQNGD.

Substrate contacts are provided by residues Asp19, Lys41, 69–78 (DLKFFDIPAT), Thr124, Arg185, Gln194, Gly214, and Arg215. Residue Lys71 is the Proton donor of the active site.

Belongs to the OMP decarboxylase family. Type 1 subfamily. Homodimer.

It carries out the reaction orotidine 5'-phosphate + H(+) = UMP + CO2. Its pathway is pyrimidine metabolism; UMP biosynthesis via de novo pathway; UMP from orotate: step 2/2. Catalyzes the decarboxylation of orotidine 5'-monophosphate (OMP) to uridine 5'-monophosphate (UMP). This Xanthomonas axonopodis pv. citri (strain 306) protein is Orotidine 5'-phosphate decarboxylase.